The following is a 613-amino-acid chain: Maintenance of telomere capping protein 6 (613 aa).

The N-terminal stretch at 1–17 is a signal peptide; that stretch reads MTSLLFAFSLFLSFSVG. The Extracellular segment spans residues 18 to 557; it reads SIFPFSTSNG…PYQETVTTDK (540 aa). 18 N-linked (GlcNAc...) asparagine glycosylation sites follow: Asn31, Asn111, Asn128, Asn136, Asn177, Asn202, Asn230, Asn242, Asn313, Asn328, Asn343, Asn375, Asn388, Asn417, Asn424, Asn425, Asn479, and Asn480. A helical transmembrane segment spans residues 558–578; the sequence is FVRMIAPSFVVAMVVLVLIFI. Topologically, residues 579-613 are cytoplasmic; the sequence is EKVFRKTPIQTNRKRYWKKAIQEYYAKNDYEGVPS.

This sequence belongs to the MTC6 family.

Its subcellular location is the membrane. Functionally, may be involved in telomere capping. This is Maintenance of telomere capping protein 6 (MTC6) from Candida albicans (strain WO-1) (Yeast).